The chain runs to 206 residues: Two-component response regulator ORR7 (206 aa).

Residues 53-92 (VVPLHDNASAEDDDDDEEDDDEDDDDDDDEDDEEEAAPPY) are disordered. Acidic residues predominate over residues 61–88 (SAEDDDDDEEDDDEDDDDDDDEDDEEEA). The Response regulatory domain occupies 92–205 (YVMAVDDSSV…DISRITSRML (114 aa)). Asp138 is modified (4-aspartylphosphate).

It belongs to the ARR family. Type-A subfamily. Post-translationally, two-component system major event consists of a His-to-Asp phosphorelay between a sensor histidine kinase (HK) and a response regulator (RR). In plants, the His-to-Asp phosphorelay involves an additional intermediate named Histidine-containing phosphotransfer protein (HPt). This multistep phosphorelay consists of a His-Asp-His-Asp sequential transfer of a phosphate group between first a His and an Asp of the HK protein, followed by the transfer to a conserved His of the HPt protein and finally the transfer to an Asp in the receiver domain of the RR protein. In terms of tissue distribution, expressed in flowers, and at low levels in roots, mature leaves and shoots.

In terms of biological role, functions as a response regulator involved in His-to-Asp phosphorelay signal transduction system. Phosphorylation of the Asp residue in the receiver domain activates the ability of the protein to promote the transcription of target genes. Type-A response regulators seem to act as negative regulators of the cytokinin signaling. The protein is Two-component response regulator ORR7 of Oryza sativa subsp. indica (Rice).